Consider the following 647-residue polypeptide: 5-aminolevulinate synthase, non-specific, mitochondrial (647 aa).

A mitochondrion-targeting transit peptide spans 1–56 (METVVRRCPFLSRVPQAFLQKAGKSLLFYAQNCPKMMEIGAKPAPRALSTSAVLCQ). The tract at residues 61 to 112 (TPPANEKDKAAKAEVQQAPDGSQQAPDGSQQTADGTQLPSGHPSLASSQGTG) is disordered. The segment covering 79–112 (PDGSQQAPDGSQQTADGTQLPSGHPSLASSQGTG) has biased composition (polar residues). Arg224, Ser341, and Lys360 together coordinate substrate. Positions 393, 421, and 449 each coordinate pyridoxal 5'-phosphate. Residue Lys452 is part of the active site. Lys452 bears the N6-(pyridoxal phosphate)lysine mark. Positions 481 and 482 each coordinate pyridoxal 5'-phosphate. Position 569 (Thr569) interacts with substrate. A Hydroxyproline modification is found at Pro583.

The protein belongs to the class-II pyridoxal-phosphate-dependent aminotransferase family. In terms of assembly, homodimer. Interacts (hydroxylated form) with VHL. The cofactor is pyridoxal 5'-phosphate. Post-translationally, in normoxia, is hydroxylated at Pro-583, promoting interaction with VHL, initiating ubiquitination and subsequent degradation via the proteasome. Ubiquitinated; in normoxia following hydroxylation and interaction with VHL, leading to its subsequent degradation via the proteasome.

The protein resides in the mitochondrion inner membrane. The enzyme catalyses succinyl-CoA + glycine + H(+) = 5-aminolevulinate + CO2 + CoA. It participates in porphyrin-containing compound metabolism; protoporphyrin-IX biosynthesis; 5-aminolevulinate from glycine: step 1/1. In terms of biological role, catalyzes the pyridoxal 5'-phosphate (PLP)-dependent condensation of succinyl-CoA and glycine to form aminolevulinic acid (ALA), with CoA and CO2 as by-products. The polypeptide is 5-aminolevulinate synthase, non-specific, mitochondrial (ALAS1) (Bos taurus (Bovine)).